We begin with the raw amino-acid sequence, 1326 residues long: F-box/WD repeat-containing protein 7 (1326 aa).

6 disordered regions span residues 1–58 (MERG…AEVG), 123–187 (DSSS…IEDE), 318–351 (TVSN…ALSR), 399–549 (GSKA…SGCS), 615–642 (RSNP…RNGS), and 797–843 (TPRS…NPPP). Polar residues predominate over residues 9-39 (SSESVTSAGERTQSAVTSSTSTWVKSQASTS). The segment covering 165–187 (NDDDDDEEPEPEEDDEEELIEDE) has biased composition (acidic residues). Over residues 320-348 (SNPSPAASANAAAPEEASTSNSSSTSSSA) the composition is skewed to low complexity. Over residues 403–464 (ANGSGTANSD…KLNLGSSLGA (62 aa)) the composition is skewed to polar residues. The span at 465–486 (SSCSQHRSGSSSTSKSMESSTS) shows a compositional bias: low complexity. Polar residues predominate over residues 495–504 (VYTNTNSNDY). Composition is skewed to low complexity over residues 510-520 (TTSGSSTSGGS), 528-546 (NVSA…SQES), and 616-631 (SNPP…GANP). 2 stretches are compositionally biased toward polar residues: residues 632-642 (TASVRQRRNGS) and 797-824 (TPRS…STPG). T813 carries the post-translational modification Phosphothreonine. Position 825 is a phosphoserine (S825). An F-box domain is found at 889–935 (RDFISLLPRELALFVLSYLEPKDLLRAAQTCRSWRFLCDDNLLWKEK). WD repeat units follow at residues 992-1030 (GHDD…CLRT), 1033-1070 (GHTG…CVHT), 1073-1110 (GHTS…CLHV), 1113-1150 (GHLA…CLHT), 1153-1190 (GHTN…CKHT), 1193-1232 (GHQS…QTLS), and 1236-1273 (KHHS…FIRN).

In terms of assembly, part of a SCF E3 ubiquitin-protein ligase complex. Interacts with Myc and puf. Interacts with CycE. Expressed in follicle cell epithelium and imaginal disks, particularly in the morphogenetic furrow.

The protein resides in the nucleus. It participates in protein modification; protein ubiquitination. In terms of biological role, substrate recognition component of a SCF (SKP1-CUL1-F-box protein) E3 ubiquitin-protein ligase complex which mediates the ubiquitination and subsequent proteasomal degradation of target proteins. Probably recognizes and binds to phosphorylated target proteins. In the wing and eye, negatively regulates cell growth and proliferation by mediating the degradation of Myc and cyclin E, respectively. Required for endocycles, but not mitosis in follicle cell epithelium. The chain is F-box/WD repeat-containing protein 7 from Drosophila melanogaster (Fruit fly).